The sequence spans 252 residues: Imidazole glycerol phosphate synthase subunit HisF (252 aa).

Active-site residues include aspartate 11 and aspartate 130.

This sequence belongs to the HisA/HisF family. In terms of assembly, heterodimer of HisH and HisF.

The protein localises to the cytoplasm. It catalyses the reaction 5-[(5-phospho-1-deoxy-D-ribulos-1-ylimino)methylamino]-1-(5-phospho-beta-D-ribosyl)imidazole-4-carboxamide + L-glutamine = D-erythro-1-(imidazol-4-yl)glycerol 3-phosphate + 5-amino-1-(5-phospho-beta-D-ribosyl)imidazole-4-carboxamide + L-glutamate + H(+). It functions in the pathway amino-acid biosynthesis; L-histidine biosynthesis; L-histidine from 5-phospho-alpha-D-ribose 1-diphosphate: step 5/9. IGPS catalyzes the conversion of PRFAR and glutamine to IGP, AICAR and glutamate. The HisF subunit catalyzes the cyclization activity that produces IGP and AICAR from PRFAR using the ammonia provided by the HisH subunit. This Desulforudis audaxviator (strain MP104C) protein is Imidazole glycerol phosphate synthase subunit HisF.